The primary structure comprises 656 residues: DNA ligase (656 aa).

Residues 32–36 (DAVYD) and 81–82 (SL) each bind NAD(+). Catalysis depends on lysine 112, which acts as the N6-AMP-lysine intermediate. NAD(+) contacts are provided by arginine 133, glutamate 167, and lysine 306. Zn(2+) is bound by residues cysteine 400, cysteine 403, cysteine 416, and cysteine 421. One can recognise a BRCT domain in the interval 577–656 (KSSSVFNNKT…ELLKRLKELD (80 aa)).

It belongs to the NAD-dependent DNA ligase family. LigA subfamily. Mg(2+) is required as a cofactor. Mn(2+) serves as cofactor.

The catalysed reaction is NAD(+) + (deoxyribonucleotide)n-3'-hydroxyl + 5'-phospho-(deoxyribonucleotide)m = (deoxyribonucleotide)n+m + AMP + beta-nicotinamide D-nucleotide.. Its function is as follows. DNA ligase that catalyzes the formation of phosphodiester linkages between 5'-phosphoryl and 3'-hydroxyl groups in double-stranded DNA using NAD as a coenzyme and as the energy source for the reaction. It is essential for DNA replication and repair of damaged DNA. The sequence is that of DNA ligase from Helicobacter pylori (strain HPAG1).